The primary structure comprises 284 residues: TnP I resolvase (284 aa).

The Core-binding (CB) domain maps to 1–84 (MDVAKQFSSY…SLAKFNEFLI (84 aa)). The 176-residue stretch at 107–282 (ASPTQIVELD…NQLQLKNKME (176 aa)) folds into the Tyr recombinase domain. Active-site residues include arginine 145, lysine 170, histidine 234, arginine 237, and histidine 260. Catalysis depends on tyrosine 269, which acts as the O-(3'-phospho-DNA)-tyrosine intermediate.

The protein belongs to the 'phage' integrase family.

Its function is as follows. Resolvase catalyzes the resolution (a site-specific recombination) of the cointegrated replicon to yield the final transposition products. The protein is TnP I resolvase (tnpI) of Bacillus thuringiensis.